The chain runs to 350 residues: Uroporphyrinogen decarboxylase (350 aa).

Substrate-binding positions include 27–31 (RQAGR), Phe-46, Asp-76, Tyr-152, Ser-207, and His-321.

Belongs to the uroporphyrinogen decarboxylase family. Homodimer.

It is found in the cytoplasm. It carries out the reaction uroporphyrinogen III + 4 H(+) = coproporphyrinogen III + 4 CO2. Its pathway is porphyrin-containing compound metabolism; protoporphyrin-IX biosynthesis; coproporphyrinogen-III from 5-aminolevulinate: step 4/4. In terms of biological role, catalyzes the decarboxylation of four acetate groups of uroporphyrinogen-III to yield coproporphyrinogen-III. The chain is Uroporphyrinogen decarboxylase from Listeria monocytogenes serotype 4a (strain HCC23).